A 726-amino-acid chain; its full sequence is Catalase-peroxidase (726 aa).

The interval 1 to 34 (MSMSDDTHNSLSTGKCPFHQGSHDRSAGAGTSSH) is disordered. A cross-link (tryptophyl-tyrosyl-methioninium (Trp-Tyr) (with M-252)) is located at residues 105-226 (WHGAGTYRSV…LGATEMGLIY (122 aa)). H106 (proton acceptor) is an active-site residue. Residues 226–252 (YVNPEGPDHSGEPLSAAAAIRATFGNM) constitute a cross-link (tryptophyl-tyrosyl-methioninium (Tyr-Met) (with W-105)). Heme b is bound at residue H267.

Belongs to the peroxidase family. Peroxidase/catalase subfamily. Homodimer or homotetramer. Heme b serves as cofactor. Post-translationally, formation of the three residue Trp-Tyr-Met cross-link is important for the catalase, but not the peroxidase activity of the enzyme.

It carries out the reaction H2O2 + AH2 = A + 2 H2O. The catalysed reaction is 2 H2O2 = O2 + 2 H2O. Functionally, bifunctional enzyme with both catalase and broad-spectrum peroxidase activity. In Citrobacter koseri (strain ATCC BAA-895 / CDC 4225-83 / SGSC4696), this protein is Catalase-peroxidase.